The chain runs to 321 residues: Aspartate carbamoyltransferase catalytic subunit (321 aa).

Residues Arg64 and Thr65 each coordinate carbamoyl phosphate. L-aspartate is bound at residue Lys92. Arg114, His144, and Gln147 together coordinate carbamoyl phosphate. Arg177 and Arg232 together coordinate L-aspartate. Residues Gly273 and Pro274 each contribute to the carbamoyl phosphate site.

This sequence belongs to the aspartate/ornithine carbamoyltransferase superfamily. ATCase family. In terms of assembly, heterododecamer (2C3:3R2) of six catalytic PyrB chains organized as two trimers (C3), and six regulatory PyrI chains organized as three dimers (R2).

It catalyses the reaction carbamoyl phosphate + L-aspartate = N-carbamoyl-L-aspartate + phosphate + H(+). Its pathway is pyrimidine metabolism; UMP biosynthesis via de novo pathway; (S)-dihydroorotate from bicarbonate: step 2/3. In terms of biological role, catalyzes the condensation of carbamoyl phosphate and aspartate to form carbamoyl aspartate and inorganic phosphate, the committed step in the de novo pyrimidine nucleotide biosynthesis pathway. The chain is Aspartate carbamoyltransferase catalytic subunit from Alkalilimnicola ehrlichii (strain ATCC BAA-1101 / DSM 17681 / MLHE-1).